Here is a 199-residue protein sequence, read N- to C-terminus: uncharacterized protein (199 aa).

A helical membrane pass occupies residues 21–38 (ISPSATNFIVSLVIMILI).

The protein localises to the membrane. This is an uncharacterized protein from Saccharomyces cerevisiae (strain ATCC 204508 / S288c) (Baker's yeast).